The sequence spans 429 residues: 3-phosphoshikimate 1-carboxyvinyltransferase (429 aa).

3-phosphoshikimate contacts are provided by K22, S23, and R27. Residue K22 coordinates phosphoenolpyruvate. The phosphoenolpyruvate site is built by G94 and R122. 4 residues coordinate 3-phosphoshikimate: S167, Q169, D315, and K342. Q169 provides a ligand contact to phosphoenolpyruvate. Catalysis depends on D315, which acts as the Proton acceptor. The phosphoenolpyruvate site is built by R346 and R388.

Belongs to the EPSP synthase family. In terms of assembly, monomer.

The protein localises to the cytoplasm. The catalysed reaction is 3-phosphoshikimate + phosphoenolpyruvate = 5-O-(1-carboxyvinyl)-3-phosphoshikimate + phosphate. It participates in metabolic intermediate biosynthesis; chorismate biosynthesis; chorismate from D-erythrose 4-phosphate and phosphoenolpyruvate: step 6/7. Functionally, catalyzes the transfer of the enolpyruvyl moiety of phosphoenolpyruvate (PEP) to the 5-hydroxyl of shikimate-3-phosphate (S3P) to produce enolpyruvyl shikimate-3-phosphate and inorganic phosphate. This chain is 3-phosphoshikimate 1-carboxyvinyltransferase, found in Citrifermentans bemidjiense (strain ATCC BAA-1014 / DSM 16622 / JCM 12645 / Bem) (Geobacter bemidjiensis).